Consider the following 258-residue polypeptide: Phosphate import ATP-binding protein PstB (258 aa).

In terms of domain architecture, ABC transporter spans 5 to 253; the sequence is LDLNDVNIYY…PTKKETEDYI (249 aa). 37 to 44 lines the ATP pocket; the sequence is GPSGCGKS.

The protein belongs to the ABC transporter superfamily. Phosphate importer (TC 3.A.1.7) family. As to quaternary structure, the complex is composed of two ATP-binding proteins (PstB), two transmembrane proteins (PstC and PstA) and a solute-binding protein (PstS).

The protein resides in the cell membrane. The catalysed reaction is phosphate(out) + ATP + H2O = ADP + 2 phosphate(in) + H(+). In terms of biological role, part of the ABC transporter complex PstSACB involved in phosphate import. Responsible for energy coupling to the transport system. The sequence is that of Phosphate import ATP-binding protein PstB from Corynebacterium jeikeium (strain K411).